The following is a 284-amino-acid chain: Phosphoenolpyruvate guanylyltransferase (284 aa).

Positions alanine 94 to glutamine 123 are disordered. A compositionally biased stretch (basic and acidic residues) spans aspartate 105–alanine 114. The phosphoenolpyruvate site is built by threonine 203, glycine 219, and serine 222.

This sequence belongs to the CofC family.

The enzyme catalyses phosphoenolpyruvate + GTP + H(+) = enolpyruvoyl-2-diphospho-5'-guanosine + diphosphate. It functions in the pathway cofactor biosynthesis; coenzyme F420 biosynthesis. Functionally, guanylyltransferase that catalyzes the activation of phosphoenolpyruvate (PEP) as enolpyruvoyl-2-diphospho-5'-guanosine, via the condensation of PEP with GTP. It is involved in the biosynthesis of coenzyme F420, a hydride carrier cofactor. The protein is Phosphoenolpyruvate guanylyltransferase of Sanguibacter keddieii (strain ATCC 51767 / DSM 10542 / NCFB 3025 / ST-74).